A 204-amino-acid polypeptide reads, in one-letter code: Recombination protein RecR (204 aa).

The segment at 58 to 75 (CSICQNVTDRGDDPCSIC) adopts a C4-type zinc-finger fold. The region spanning 83-181 (SKICVVESPP…EVTKIARGIP (99 aa)) is the Toprim domain.

Belongs to the RecR family.

Its function is as follows. May play a role in DNA repair. It seems to be involved in an RecBC-independent recombinational process of DNA repair. It may act with RecF and RecO. The protein is Recombination protein RecR of Chlorobium phaeobacteroides (strain BS1).